The primary structure comprises 563 residues: Tripeptidyl-peptidase 1 (563 aa).

A signal peptide spans 1-19 (MGLQACLLGLFALILSGKC). Positions 20–195 (SYSPEPDQRR…PEPQVTGTVG (176 aa)) are cleaved as a propeptide — removed in mature form. Cysteines 111 and 122 form a disulfide. The region spanning 199 to 563 (GVTPSVIRKR…PALLKTLLNP (365 aa)) is the Peptidase S53 domain. N-linked (GlcNAc...) asparagine glycosylation is found at asparagine 210 and asparagine 222. Active-site charge relay system residues include glutamate 272 and aspartate 276. N-linked (GlcNAc...) asparagine glycosylation is found at asparagine 286, asparagine 313, and asparagine 443. Cystine bridges form between cysteine 365/cysteine 526 and cysteine 522/cysteine 537. Serine 475 serves as the catalytic Charge relay system. Ca(2+)-binding residues include aspartate 517 and valine 518. 3 residues coordinate Ca(2+): glycine 539, glycine 541, and aspartate 543.

Monomer. Interacts with CLN5. Interacts with CLN3. It depends on Ca(2+) as a cofactor. Post-translationally, activated by autocatalytic proteolytical processing upon acidification. N-glycosylation is required for processing and activity. In terms of tissue distribution, detected in all tissues examined with highest levels in heart and placenta and relatively similar levels in other tissues.

The protein localises to the lysosome. It localises to the melanosome. The enzyme catalyses Release of an N-terminal tripeptide from a polypeptide, but also has endopeptidase activity.. Inhibited by diisopropyl fluorophosphate (DFP). Functionally, lysosomal serine protease with tripeptidyl-peptidase I activity. May act as a non-specific lysosomal peptidase which generates tripeptides from the breakdown products produced by lysosomal proteinases. Requires substrates with an unsubstituted N-terminus. This is Tripeptidyl-peptidase 1 (TPP1) from Homo sapiens (Human).